The following is a 92-amino-acid chain: Small ribosomal subunit protein bS18 (92 aa).

The disordered stretch occupies residues 1-22 (MADERAPQRSTSGPRKKRPFQR).

It belongs to the bacterial ribosomal protein bS18 family. Part of the 30S ribosomal subunit. Forms a tight heterodimer with protein bS6.

Its function is as follows. Binds as a heterodimer with protein bS6 to the central domain of the 16S rRNA, where it helps stabilize the platform of the 30S subunit. The polypeptide is Small ribosomal subunit protein bS18 (Citrifermentans bemidjiense (strain ATCC BAA-1014 / DSM 16622 / JCM 12645 / Bem) (Geobacter bemidjiensis)).